A 365-amino-acid chain; its full sequence is tRNA-specific 2-thiouridylase MnmA (365 aa).

Residues 9 to 16 (AMSGGVDS) and methionine 35 contribute to the ATP site. The Nucleophile role is filled by cysteine 105. An intrachain disulfide couples cysteine 105 to cysteine 203. Residue glycine 129 participates in ATP binding. The tract at residues 153-155 (KDQ) is interaction with tRNA. The active-site Cysteine persulfide intermediate is cysteine 203. Residues 308 to 309 (RY) form an interaction with tRNA region.

Belongs to the MnmA/TRMU family.

It localises to the cytoplasm. It catalyses the reaction S-sulfanyl-L-cysteinyl-[protein] + uridine(34) in tRNA + AH2 + ATP = 2-thiouridine(34) in tRNA + L-cysteinyl-[protein] + A + AMP + diphosphate + H(+). Its function is as follows. Catalyzes the 2-thiolation of uridine at the wobble position (U34) of tRNA, leading to the formation of s(2)U34. This chain is tRNA-specific 2-thiouridylase MnmA, found in Pelotomaculum thermopropionicum (strain DSM 13744 / JCM 10971 / SI).